The sequence spans 152 residues: Flagellar assembly factor FliW (152 aa).

This sequence belongs to the FliW family. Interacts with translational regulator CsrA and flagellin(s).

The protein localises to the cytoplasm. In terms of biological role, acts as an anti-CsrA protein, binds CsrA and prevents it from repressing translation of its target genes, one of which is flagellin. Binds to flagellin and participates in the assembly of the flagellum. The chain is Flagellar assembly factor FliW from Desulfitobacterium hafniense (strain Y51).